The sequence spans 466 residues: Cysteine--tRNA ligase (466 aa).

Cysteine 27 contacts Zn(2+). The 'HIGH' region motif lies at 29-39 (PTVYNFFHIGN). Cysteine 207, histidine 232, and glutamate 236 together coordinate Zn(2+). The 'KMSKS' region signature appears at 264–268 (KMSKS). Position 267 (lysine 267) interacts with ATP.

This sequence belongs to the class-I aminoacyl-tRNA synthetase family. In terms of assembly, monomer. Zn(2+) is required as a cofactor.

Its subcellular location is the cytoplasm. It catalyses the reaction tRNA(Cys) + L-cysteine + ATP = L-cysteinyl-tRNA(Cys) + AMP + diphosphate. This chain is Cysteine--tRNA ligase, found in Clostridium beijerinckii (strain ATCC 51743 / NCIMB 8052) (Clostridium acetobutylicum).